The primary structure comprises 381 residues: Sulfate adenylyltransferase (381 aa).

Belongs to the sulfate adenylyltransferase family.

The catalysed reaction is sulfate + ATP + H(+) = adenosine 5'-phosphosulfate + diphosphate. The protein operates within sulfur metabolism; hydrogen sulfide biosynthesis; sulfite from sulfate: step 1/3. The protein is Sulfate adenylyltransferase of Chloroflexus aurantiacus (strain ATCC 29366 / DSM 635 / J-10-fl).